Reading from the N-terminus, the 202-residue chain is Large ribosomal subunit protein uL4 (202 aa).

A disordered region spans residues 40-71 (GRQGSKAQKTRSQVSGGGKKPWRQKGSGRARA). The segment covering 44–53 (SKAQKTRSQV) has biased composition (polar residues).

The protein belongs to the universal ribosomal protein uL4 family. Part of the 50S ribosomal subunit.

Functionally, one of the primary rRNA binding proteins, this protein initially binds near the 5'-end of the 23S rRNA. It is important during the early stages of 50S assembly. It makes multiple contacts with different domains of the 23S rRNA in the assembled 50S subunit and ribosome. Forms part of the polypeptide exit tunnel. This chain is Large ribosomal subunit protein uL4, found in Hahella chejuensis (strain KCTC 2396).